The following is a 326-amino-acid chain: Glycerol-3-phosphate dehydrogenase [NAD(P)+] (326 aa).

Residues W15, R35, and K107 each contribute to the NADPH site. K107, G135, and S137 together coordinate sn-glycerol 3-phosphate. A139 contributes to the NADPH binding site. Sn-glycerol 3-phosphate-binding residues include K190, D243, S253, R254, and N255. The active-site Proton acceptor is K190. R254 serves as a coordination point for NADPH. The NADPH site is built by L273 and E275.

Belongs to the NAD-dependent glycerol-3-phosphate dehydrogenase family.

It localises to the cytoplasm. It catalyses the reaction sn-glycerol 3-phosphate + NAD(+) = dihydroxyacetone phosphate + NADH + H(+). The catalysed reaction is sn-glycerol 3-phosphate + NADP(+) = dihydroxyacetone phosphate + NADPH + H(+). It functions in the pathway membrane lipid metabolism; glycerophospholipid metabolism. In terms of biological role, catalyzes the reduction of the glycolytic intermediate dihydroxyacetone phosphate (DHAP) to sn-glycerol 3-phosphate (G3P), the key precursor for phospholipid synthesis. In Bradyrhizobium diazoefficiens (strain JCM 10833 / BCRC 13528 / IAM 13628 / NBRC 14792 / USDA 110), this protein is Glycerol-3-phosphate dehydrogenase [NAD(P)+].